Reading from the N-terminus, the 205-residue chain is Holliday junction branch migration complex subunit RuvA (205 aa).

The interval 1–64 is domain I; it reads MIGRLKGILI…ENLHQLFGFA (64 aa). The domain II stretch occupies residues 65 to 143; sequence EQRDRSLFRT…NWDLPQGDML (79 aa). Residues 144–153 are flexible linker; that stretch reads AHGEIQAIAS. The tract at residues 153-205 is domain III; sequence SDNDIYAEAESALIALGYKPVDAAKMVASAAKQKPEARSEELIRIALRSLAGV.

This sequence belongs to the RuvA family. As to quaternary structure, homotetramer. Forms an RuvA(8)-RuvB(12)-Holliday junction (HJ) complex. HJ DNA is sandwiched between 2 RuvA tetramers; dsDNA enters through RuvA and exits via RuvB. An RuvB hexamer assembles on each DNA strand where it exits the tetramer. Each RuvB hexamer is contacted by two RuvA subunits (via domain III) on 2 adjacent RuvB subunits; this complex drives branch migration. In the full resolvosome a probable DNA-RuvA(4)-RuvB(12)-RuvC(2) complex forms which resolves the HJ.

The protein resides in the cytoplasm. Functionally, the RuvA-RuvB-RuvC complex processes Holliday junction (HJ) DNA during genetic recombination and DNA repair, while the RuvA-RuvB complex plays an important role in the rescue of blocked DNA replication forks via replication fork reversal (RFR). RuvA specifically binds to HJ cruciform DNA, conferring on it an open structure. The RuvB hexamer acts as an ATP-dependent pump, pulling dsDNA into and through the RuvAB complex. HJ branch migration allows RuvC to scan DNA until it finds its consensus sequence, where it cleaves and resolves the cruciform DNA. The polypeptide is Holliday junction branch migration complex subunit RuvA (Cellvibrio japonicus (strain Ueda107) (Pseudomonas fluorescens subsp. cellulosa)).